Reading from the N-terminus, the 611-residue chain is Protein ral2 (611 aa).

3 Kelch repeats span residues 43-91, 96-149, and 175-224; these read EAFV…HSGD, KLIF…EVNG, and YLII…VINK. Ser604 is subject to Phosphoserine.

Functionally, essential for mating and for recognition of the mating pheromone, and for the determination of cell shape. Implicated in activation of the ras1 protein. The chain is Protein ral2 (ral2) from Schizosaccharomyces pombe (strain 972 / ATCC 24843) (Fission yeast).